The chain runs to 249 residues: 5'-nucleotidase SurE (249 aa).

A divalent metal cation is bound by residues D9, D10, S40, and N92.

This sequence belongs to the SurE nucleotidase family. A divalent metal cation is required as a cofactor.

The protein localises to the cytoplasm. It catalyses the reaction a ribonucleoside 5'-phosphate + H2O = a ribonucleoside + phosphate. Nucleotidase that shows phosphatase activity on nucleoside 5'-monophosphates. The chain is 5'-nucleotidase SurE from Shewanella baltica (strain OS195).